Here is a 1235-residue protein sequence, read N- to C-terminus: Receptor-type adenylate cyclase ESAG 4 (1235 aa).

The interval 1–20 (MNMLHLSDRNASLAPSGGEH) is disordered. Residues 1–32 (MNMLHLSDRNASLAPSGGEHSLPTGGAVCRDA) are Cytoplasmic-facing. Residues 33-53 (MDILPVILRAPVALLLLLVVL) traverse the membrane as a helical segment. Residues 54–858 (PQLSVGAEAN…SNAGRISGAS (805 aa)) lie on the Extracellular side of the membrane. Residues N63, N90, N97, N362, N531, N566, N705, and N830 are each glycosylated (N-linked (GlcNAc...) asparagine). The helical transmembrane segment at 859-879 (LVGIIIGGALALFLVVALGVV) threads the bilayer. The Cytoplasmic segment spans residues 880 to 1235 (PYFFLRNTVI…VSSQVEERLL (356 aa)). The region spanning 900–1054 (TLIFTDIESS…RTSNMAARTE (155 aa)) is the Guanylate cyclase domain. Mg(2+)-binding residues include D905 and D948.

This sequence belongs to the adenylyl cyclase class-3 family. Mg(2+) serves as cofactor.

It is found in the membrane. The catalysed reaction is ATP = 3',5'-cyclic AMP + diphosphate. Functionally, could act as a receptor for an unknown ligand. The protein is Receptor-type adenylate cyclase ESAG 4 (ESAG4) of Trypanosoma brucei brucei.